Consider the following 222-residue polypeptide: DnaJ homolog subfamily B member 9 (222 aa).

Positions 1–23 are cleaved as a signal peptide; the sequence is MATPQSVFVFAICILMITELILA. In terms of domain architecture, J spans 26–90; sequence SYYDILGVPK…HRRKEYDTVG (65 aa). Residues 91–222 are divergent targeting domain; sequence HTAFTNGKGQ…VTTYTDCSGQ (132 aa). At Ser133 the chain carries Phosphoserine.

As to quaternary structure, interacts with HSPA5/BiP; interaction is direct. Interacts with ERN1/IRE1 (via the luminal region). Interacts with DERL1.

The protein localises to the endoplasmic reticulum lumen. Functionally, co-chaperone for Hsp70 protein HSPA5/BiP that acts as a key repressor of the ERN1/IRE1-mediated unfolded protein response (UPR). J domain-containing co-chaperones stimulate the ATPase activity of Hsp70 proteins and are required for efficient substrate recognition by Hsp70 proteins. In the unstressed endoplasmic reticulum, interacts with the luminal region of ERN1/IRE1 and selectively recruits HSPA5/BiP: HSPA5/BiP disrupts the dimerization of the active ERN1/IRE1 luminal region, thereby inactivating ERN1/IRE1. Also involved in endoplasmic reticulum-associated degradation (ERAD) of misfolded proteins. Required for survival of B-cell progenitors and normal antibody production. In Cricetulus griseus (Chinese hamster), this protein is DnaJ homolog subfamily B member 9.